The chain runs to 310 residues: Proline iminopeptidase (310 aa).

The 258-residue stretch at P33 to F290 folds into the AB hydrolase-1 domain. The active-site Nucleophile is the S107. Residue D260 is part of the active site. The Proton donor role is filled by H287.

It belongs to the peptidase S33 family.

The protein resides in the cytoplasm. The catalysed reaction is Release of N-terminal proline from a peptide.. In terms of biological role, specifically catalyzes the removal of N-terminal proline residues from peptides. This Neisseria meningitidis serogroup B (strain ATCC BAA-335 / MC58) protein is Proline iminopeptidase (pip).